Reading from the N-terminus, the 158-residue chain is Inorganic pyrophosphatase (158 aa).

E8 lines the Mg(2+) pocket. Positions 16, 30, and 42 each coordinate substrate. Mg(2+) is bound by residues D52, D57, D84, and D89. D89 acts as the Proton acceptor in catalysis. Y125 serves as a coordination point for substrate.

Belongs to the PPase family. Homohexamer. The cofactor is Mg(2+).

Its subcellular location is the cytoplasm. It carries out the reaction diphosphate + H2O = 2 phosphate + H(+). In terms of biological role, catalyzes the hydrolysis of inorganic pyrophosphate (PPi) forming two phosphate ions. This is Inorganic pyrophosphatase from Corynebacterium efficiens (strain DSM 44549 / YS-314 / AJ 12310 / JCM 11189 / NBRC 100395).